A 191-amino-acid chain; its full sequence is Probable nicotinate-nucleotide adenylyltransferase (191 aa).

It belongs to the NadD family.

The enzyme catalyses nicotinate beta-D-ribonucleotide + ATP + H(+) = deamido-NAD(+) + diphosphate. It participates in cofactor biosynthesis; NAD(+) biosynthesis; deamido-NAD(+) from nicotinate D-ribonucleotide: step 1/1. Its function is as follows. Catalyzes the reversible adenylation of nicotinate mononucleotide (NaMN) to nicotinic acid adenine dinucleotide (NaAD). This Staphylococcus epidermidis (strain ATCC 12228 / FDA PCI 1200) protein is Probable nicotinate-nucleotide adenylyltransferase.